The primary structure comprises 719 residues: DNA ligase (719 aa).

NAD(+) contacts are provided by residues 42–46 (DAAYD), 92–93 (SL), and Glu126. The active-site N6-AMP-lysine intermediate is the Lys128. Residues Arg149, Glu185, Lys301, and Lys325 each contribute to the NAD(+) site. Zn(2+) contacts are provided by Cys430, Cys433, Cys448, and Cys454. One can recognise a BRCT domain in the interval 640 to 719 (ATGSPVEGKT…DDWFKLVGED (80 aa)).

Belongs to the NAD-dependent DNA ligase family. LigA subfamily. The cofactor is Mg(2+). It depends on Mn(2+) as a cofactor.

It catalyses the reaction NAD(+) + (deoxyribonucleotide)n-3'-hydroxyl + 5'-phospho-(deoxyribonucleotide)m = (deoxyribonucleotide)n+m + AMP + beta-nicotinamide D-nucleotide.. DNA ligase that catalyzes the formation of phosphodiester linkages between 5'-phosphoryl and 3'-hydroxyl groups in double-stranded DNA using NAD as a coenzyme and as the energy source for the reaction. It is essential for DNA replication and repair of damaged DNA. In Brucella melitensis biotype 1 (strain ATCC 23456 / CCUG 17765 / NCTC 10094 / 16M), this protein is DNA ligase.